Here is a 179-residue protein sequence, read N- to C-terminus: ADP-ribosylation factor-like protein 5A (179 aa).

Residue Gly-2 is the site of N-myristoyl glycine attachment. GTP is bound by residues 23–30 (GLDNAGKT), 66–70 (DIGGQ), 125–128 (NKQD), and Ala-159.

Belongs to the small GTPase superfamily. Arf family.

Its function is as follows. Lacks ADP-ribosylation enhancing activity. The chain is ADP-ribosylation factor-like protein 5A (ARL5A) from Homo sapiens (Human).